The primary structure comprises 122 residues: Fluoride-specific ion channel FluC (122 aa).

Transmembrane regions (helical) follow at residues 6–26, 33–53, 60–80, and 101–121; these read LVVG…INLV, SISF…GLLF, GLSP…FTTF, and LNII…FLIF. Na(+) is bound by residues Gly-75 and Thr-78.

It belongs to the fluoride channel Fluc/FEX (TC 1.A.43) family.

The protein resides in the cell inner membrane. It carries out the reaction fluoride(in) = fluoride(out). With respect to regulation, na(+) is not transported, but it plays an essential structural role and its presence is essential for fluoride channel function. Its function is as follows. Fluoride-specific ion channel. Important for reducing fluoride concentration in the cell, thus reducing its toxicity. This Campylobacter jejuni subsp. jejuni serotype O:2 (strain ATCC 700819 / NCTC 11168) protein is Fluoride-specific ion channel FluC.